The following is a 425-amino-acid chain: Serine--tRNA ligase 2 (425 aa).

230–232 is a binding site for L-serine; sequence TAE. 261–263 contributes to the ATP binding site; the sequence is REE. An L-serine-binding site is contributed by Glu-284. ATP is bound at residue 348–351; it reads EISS. Residue Ser-383 coordinates L-serine.

It belongs to the class-II aminoacyl-tRNA synthetase family. Type-1 seryl-tRNA synthetase subfamily. Homodimer. The tRNA molecule binds across the dimer.

It is found in the cytoplasm. It carries out the reaction tRNA(Ser) + L-serine + ATP = L-seryl-tRNA(Ser) + AMP + diphosphate + H(+). The enzyme catalyses tRNA(Sec) + L-serine + ATP = L-seryl-tRNA(Sec) + AMP + diphosphate + H(+). It functions in the pathway aminoacyl-tRNA biosynthesis; selenocysteinyl-tRNA(Sec) biosynthesis; L-seryl-tRNA(Sec) from L-serine and tRNA(Sec): step 1/1. In terms of biological role, catalyzes the attachment of serine to tRNA(Ser). Is also able to aminoacylate tRNA(Sec) with serine, to form the misacylated tRNA L-seryl-tRNA(Sec), which will be further converted into selenocysteinyl-tRNA(Sec). The polypeptide is Serine--tRNA ligase 2 (Lactiplantibacillus plantarum (strain ATCC BAA-793 / NCIMB 8826 / WCFS1) (Lactobacillus plantarum)).